The following is a 176-amino-acid chain: MNKCFRCQPRISLFQFSLPRCYAAVQPGCPPPQEKPVVGLPHKPDPKTVKCDYIGPPDAQSNLRPYVRHYGDEETRLARSLRLKRIEVEAWNTDFWTKHNKRFYEEKEDFIRLHKESGTSEVSADQMSHFYKAFLDKNWRIHIMYNISWYLKNFDILTLAAAVQLQRLLALAKRRS.

The transit peptide at 1 to 23 (MNKCFRCQPRISLFQFSLPRCYA) directs the protein to the mitochondrion.

It belongs to the COA8 family.

Its subcellular location is the mitochondrion inner membrane. In terms of biological role, may be required for cytochrome c complex (COX) assembly and function, COX being the terminal component of the mitochondrial respiratory chain. Functionally, (Microbial infection) Required for optimal replication of E.chaffeensis. In Drosophila melanogaster (Fruit fly), this protein is COA8 family protein CG14806, mitochondrial.